A 423-amino-acid chain; its full sequence is Serine--tRNA ligase (423 aa).

An L-serine-binding site is contributed by Thr231–Glu233. Residue Arg262–Glu264 coordinates ATP. Glu285 is an L-serine binding site. Residue Glu349–Ser352 coordinates ATP. Ser385 provides a ligand contact to L-serine.

It belongs to the class-II aminoacyl-tRNA synthetase family. Type-1 seryl-tRNA synthetase subfamily. Homodimer. The tRNA molecule binds across the dimer.

The protein resides in the cytoplasm. The catalysed reaction is tRNA(Ser) + L-serine + ATP = L-seryl-tRNA(Ser) + AMP + diphosphate + H(+). It carries out the reaction tRNA(Sec) + L-serine + ATP = L-seryl-tRNA(Sec) + AMP + diphosphate + H(+). It functions in the pathway aminoacyl-tRNA biosynthesis; selenocysteinyl-tRNA(Sec) biosynthesis; L-seryl-tRNA(Sec) from L-serine and tRNA(Sec): step 1/1. Functionally, catalyzes the attachment of serine to tRNA(Ser). Is also able to aminoacylate tRNA(Sec) with serine, to form the misacylated tRNA L-seryl-tRNA(Sec), which will be further converted into selenocysteinyl-tRNA(Sec). This chain is Serine--tRNA ligase, found in Acholeplasma laidlawii (strain PG-8A).